We begin with the raw amino-acid sequence, 579 residues long: MCDQQQIQCRLPLQQCCVKGPSFCSSQSPFAQSQVVVQAPCEMQIVDCPASCPVQVCQVSDQAPCQSQTTQVKCQSKTKQVKGQAQCQSKTTQVKGQAASQSQTSSVQSQAPCQSEVSYVQCEASQPVQTCFVECAPVCYTETCYVECPVQNYVPCPAPQPVQMYRGRPAVCQPQGRFSTQCQYQGSYSSCGPQFQSRATCNNYTPQFQLRPSYSSCFPQYRSRTSFSPCVPQCQTQGSYGSFTEQHRSRSTSRCLPPPRRLQLFPRSCSPPRRFEPCSSSYLPLRPSEGFPNYCTPPRRSEPIYNSRCPRRPISSCSQRRGPKCRIEISSPCCPRQVPPQRCPVEIPPIRRRSQSCGPQPSWGASCPELRPHVEPRPLPSFCPPRRLDQCPESPLQRCPPPAPRPRLRPEPCISLEPRPRPLPRQLSEPCLYPEPLPALRPTPRPVPLPRPGQCEIPEPRPCLQPCEHPEPCPRPEPIPLPAPCPSPEPCRETWRSPSPCWGPNPVPYPGDLGCHESSPHRLDTEAPYCGPSSYNQGQESGAGCGPGDVFPERRGQDGHGDQGNAFAGVKGEAKSAYF.

Serine 394 carries the phosphoserine modification. The disordered stretch occupies residues 526–579; the sequence is EAPYCGPSSYNQGQESGAGCGPGDVFPERRGQDGHGDQGNAFAGVKGEAKSAYF. Residues 551-561 show a composition bias toward basic and acidic residues; the sequence is FPERRGQDGHG.

Expressed in the upper layer of epidermis and psoriasis (at protein level). Expressed in the upper layer of epidermis and psoriasis.

The protein resides in the cytoplasm. This is Keratinocyte proline-rich protein (KPRP) from Homo sapiens (Human).